The sequence spans 255 residues: 5'-nucleotidase SurE (255 aa).

A divalent metal cation-binding residues include Asp8, Asp9, Ser39, and Asn95.

This sequence belongs to the SurE nucleotidase family. It depends on a divalent metal cation as a cofactor.

The protein resides in the cytoplasm. The catalysed reaction is a ribonucleoside 5'-phosphate + H2O = a ribonucleoside + phosphate. In terms of biological role, nucleotidase that shows phosphatase activity on nucleoside 5'-monophosphates. This is 5'-nucleotidase SurE from Thermosipho africanus (strain TCF52B).